A 473-amino-acid chain; its full sequence is MTKNIGKITQIISAVVDVKFTNNGELPEILNALECYNDKQRIVLEVAQHIGDDTVRCIAMDSTEGLVRGVEVMDTGSPICIPVGTETLGRIMNVVGEPIDGKGDIKSSNISAIYKSAPDFTNQSTERNILVTGIKVVDLLAPYIKGGKIGLFGGAGVGKTVLIMELINNVAKAHGGYTVFAGVGERTREGNDLYHEMIDSGVIDLEKPENSKVALVYGQMNAPPGARARVALSGLTIAESFRDMNGGQDVLFFVDNIFRFTQAGSEVSALLGRIPSAVGYQPTLATDMGELQERITSTKHGSITSVQAIYVPADDLTDPAPATSFAHLDATTVLSRQIAEFGIYPAVDPLDSNSQVLDPMIVGEEHYSVARQVQQVLQTYKSLQDIIAILGMDELSEEDKLTVSRARKIQRFLSQPFHVAEVFTGSEGKFVNLADTIAGFKGLVEGKYDDLPEAAFYMVGTIDEAIEKAKILK.

An ATP-binding site is contributed by 153–160 (GGAGVGKT).

Belongs to the ATPase alpha/beta chains family. In terms of assembly, F-type ATPases have 2 components, CF(1) - the catalytic core - and CF(0) - the membrane proton channel. CF(1) has five subunits: alpha(3), beta(3), gamma(1), delta(1), epsilon(1). CF(0) has three main subunits: a(1), b(2) and c(9-12). The alpha and beta chains form an alternating ring which encloses part of the gamma chain. CF(1) is attached to CF(0) by a central stalk formed by the gamma and epsilon chains, while a peripheral stalk is formed by the delta and b chains.

It localises to the cell inner membrane. The enzyme catalyses ATP + H2O + 4 H(+)(in) = ADP + phosphate + 5 H(+)(out). Produces ATP from ADP in the presence of a proton gradient across the membrane. The catalytic sites are hosted primarily by the beta subunits. The polypeptide is ATP synthase subunit beta (Rickettsia akari (strain Hartford)).